Consider the following 477-residue polypeptide: Ribulose bisphosphate carboxylase large chain (477 aa).

The propeptide occupies 1–2; sequence MS. The residue at position 3 (proline 3) is an N-acetylproline. Lysine 14 carries the N6,N6,N6-trimethyllysine modification. Substrate contacts are provided by asparagine 123 and threonine 173. Lysine 175 (proton acceptor) is an active-site residue. Lysine 177 provides a ligand contact to substrate. Residues lysine 201, aspartate 203, and glutamate 204 each coordinate Mg(2+). The residue at position 201 (lysine 201) is an N6-carboxylysine. Residue histidine 294 is the Proton acceptor of the active site. Substrate contacts are provided by arginine 295, histidine 327, and serine 379.

This sequence belongs to the RuBisCO large chain family. Type I subfamily. In terms of assembly, heterohexadecamer of 8 large chains and 8 small chains; disulfide-linked. The disulfide link is formed within the large subunit homodimers. It depends on Mg(2+) as a cofactor. In terms of processing, the disulfide bond which can form in the large chain dimeric partners within the hexadecamer appears to be associated with oxidative stress and protein turnover.

It localises to the plastid. It is found in the chloroplast. It catalyses the reaction 2 (2R)-3-phosphoglycerate + 2 H(+) = D-ribulose 1,5-bisphosphate + CO2 + H2O. The enzyme catalyses D-ribulose 1,5-bisphosphate + O2 = 2-phosphoglycolate + (2R)-3-phosphoglycerate + 2 H(+). In terms of biological role, ruBisCO catalyzes two reactions: the carboxylation of D-ribulose 1,5-bisphosphate, the primary event in carbon dioxide fixation, as well as the oxidative fragmentation of the pentose substrate in the photorespiration process. Both reactions occur simultaneously and in competition at the same active site. This is Ribulose bisphosphate carboxylase large chain from Nicotiana acuminata (Acuminate tobacco).